The following is a 339-amino-acid chain: Methionine import ATP-binding protein MetN 2 (339 aa).

The region spanning 2 to 241 (ISFNNVSKVY…PKTTTTQNFV (240 aa)) is the ABC transporter domain. An ATP-binding site is contributed by 38 to 45 (GFSGAGKS).

It belongs to the ABC transporter superfamily. Methionine importer (TC 3.A.1.24) family. As to quaternary structure, the complex is composed of two ATP-binding proteins (MetN), two transmembrane proteins (MetI) and a solute-binding protein (MetQ).

It localises to the cell membrane. The catalysed reaction is L-methionine(out) + ATP + H2O = L-methionine(in) + ADP + phosphate + H(+). It carries out the reaction D-methionine(out) + ATP + H2O = D-methionine(in) + ADP + phosphate + H(+). Functionally, part of the ABC transporter complex MetNIQ involved in methionine import. Responsible for energy coupling to the transport system. The protein is Methionine import ATP-binding protein MetN 2 of Bacillus anthracis.